A 136-amino-acid chain; its full sequence is DNA-binding protein H-NS (136 aa).

Residues 13–67 (TLRAQARECTLETLEEMLEKLEVVVNERREEDSQAQAEIEERTRKLQQYREMLIA) are a coiled coil. Residues 113–118 (QGRTPA) mediate DNA binding.

This sequence belongs to the histone-like protein H-NS family. As to quaternary structure, interacts with YmoA in the absence of DNA. Homodimer that oligomerizes on DNA into higher-order complexes that form bridges between disparate regions of DNA compacting it. Interacts with YmoA.

It is found in the cytoplasm. The protein resides in the nucleoid. Functionally, a DNA-binding protein implicated in transcriptional repression and chromosome organization and compaction. Binds nucleation sites in AT-rich DNA and bridges them, forming higher-order nucleoprotein complexes and condensing the chromosome. As many horizontally transferred genes are AT-rich, it plays a central role in silencing foreign genes. A subset of genes are repressed by H-NS in association with YmoA. Complements a number of hns deficiencies in E.coli; represses the bgl operon, represses hemolysin expression. This Yersinia enterocolitica protein is DNA-binding protein H-NS.